The sequence spans 860 residues: Glucans biosynthesis glucosyltransferase H (860 aa).

6 helical membrane passes run 141–161, 187–207, 515–535, 572–592, 599–619, and 682–702; these read FILL…MKGI, VLPY…FCWV, VFLT…FLVL, LFST…MLIW, FGGV…SVLL, and FLWW…VSVI.

This sequence belongs to the glycosyltransferase 2 family. OpgH subfamily.

The protein resides in the cell inner membrane. The protein operates within glycan metabolism; osmoregulated periplasmic glucan (OPG) biosynthesis. Functionally, involved in the biosynthesis of osmoregulated periplasmic glucans (OPGs). This Pseudomonas paraeruginosa (strain DSM 24068 / PA7) (Pseudomonas aeruginosa (strain PA7)) protein is Glucans biosynthesis glucosyltransferase H.